An 840-amino-acid polypeptide reads, in one-letter code: Wings apart-like protein 2 (840 aa).

Disordered stretches follow at residues 1-37, 56-78, and 532-594; these read MMER…EPVD, SDND…FGSN, and FDLE…DHHV. Residues 546 to 557 are compositionally biased toward basic residues; the sequence is KQKKSKGQKRKG. Residues 558-567 show a composition bias toward basic and acidic residues; that stretch reads SYRDKKDERS. Residues 569 to 585 are compositionally biased toward polar residues; it reads QLFSSQEESNHGLNSQE. One can recognise a WAPL domain in the interval 764-819; sequence KEAEKMIVEAYSALLLAFLSTESRSIRNAIRDYLPKRDMAILVPVLDRFVAFHTTL.

The protein belongs to the WAPL family. In terms of assembly, interacts with the cohesin complex throughout the cell cycle. In terms of tissue distribution, expressed in roots, leaves, buds and siliques.

The protein localises to the nucleus. It localises to the chromosome. Regulator of sister chromatid cohesion in meiosis which negatively regulates cohesin association with chromatin, acting as an antagonist of CTF7. Cohesion ensures that chromosome partitioning is accurate in both meiotic and mitotic cells and plays an important role in DNA repair. Essential for the prophase removal of cohesin during meiosis thus determining the timely release of meiotic cohesion. Important for proper spindle attachment and assembly during meiosis. Helps to prevent abnormal centromere association during prophase I in meiocytes. Required for early embryonic patterning. Also involved in chromosome segregation during mitosis. The sequence is that of Wings apart-like protein 2 from Arabidopsis thaliana (Mouse-ear cress).